The primary structure comprises 220 residues: Inner membrane-spanning protein YciB (220 aa).

Transmembrane regions (helical) follow at residues 20-40 (EVPP…FFFA), 57-77 (IGAP…IALA), 86-106 (LPIM…LTLW), 123-143 (LFGG…GYVF), 156-176 (KLTL…EIVW), and 187-207 (FKVW…MPLI).

This sequence belongs to the YciB family.

The protein resides in the cell inner membrane. Its function is as follows. Plays a role in cell envelope biogenesis, maintenance of cell envelope integrity and membrane homeostasis. The chain is Inner membrane-spanning protein YciB from Brucella abortus (strain S19).